Reading from the N-terminus, the 430-residue chain is GTPase Obg (430 aa).

Positions 1–158 (MFVDQVKISL…LEVTLELKLL (158 aa)) constitute an Obg domain. A disordered region spans residues 118–145 (RGGRGGRGNSRFATPRNPAPDFSENGEP). Positions 159 to 329 (ADVGLVGFPS…LLYQIADKLE (171 aa)) constitute an OBG-type G domain. GTP-binding positions include 165–172 (GFPSVGKS), 190–194 (FTTIK), 212–215 (DLPG), 282–285 (NKMD), and 310–312 (STI). Mg(2+)-binding residues include serine 172 and threonine 192. The OCT domain maps to 352–430 (KHTPSADKFT…ILGGEFEFVE (79 aa)).

The protein belongs to the TRAFAC class OBG-HflX-like GTPase superfamily. OBG GTPase family. In terms of assembly, monomer. Mg(2+) is required as a cofactor.

The protein localises to the cytoplasm. Its function is as follows. An essential GTPase which binds GTP, GDP and possibly (p)ppGpp with moderate affinity, with high nucleotide exchange rates and a fairly low GTP hydrolysis rate. Plays a role in control of the cell cycle, stress response, ribosome biogenesis and in those bacteria that undergo differentiation, in morphogenesis control. The polypeptide is GTPase Obg (Staphylococcus epidermidis (strain ATCC 35984 / DSM 28319 / BCRC 17069 / CCUG 31568 / BM 3577 / RP62A)).